The chain runs to 147 residues: Nucleoside diphosphate kinase (147 aa).

6 residues coordinate ATP: Lys-11, Phe-59, Arg-87, Thr-93, Arg-104, and Asn-114. His-117 functions as the Pros-phosphohistidine intermediate in the catalytic mechanism.

The protein belongs to the NDK family. As to quaternary structure, homotetramer. Mg(2+) serves as cofactor.

The protein resides in the cytoplasm. The enzyme catalyses a 2'-deoxyribonucleoside 5'-diphosphate + ATP = a 2'-deoxyribonucleoside 5'-triphosphate + ADP. It catalyses the reaction a ribonucleoside 5'-diphosphate + ATP = a ribonucleoside 5'-triphosphate + ADP. Its function is as follows. Major role in the synthesis of nucleoside triphosphates other than ATP. The ATP gamma phosphate is transferred to the NDP beta phosphate via a ping-pong mechanism, using a phosphorylated active-site intermediate. The protein is Nucleoside diphosphate kinase of Anaeromyxobacter dehalogenans (strain 2CP-1 / ATCC BAA-258).